The primary structure comprises 625 residues: Chaperone protein DnaK (625 aa).

Position 197 is a phosphothreonine; by autocatalysis (T197). Positions 598–625 are disordered; it reads MYKKDDNASGEQSGGKKKDDDVIDAEVE.

It belongs to the heat shock protein 70 family.

Acts as a chaperone. The polypeptide is Chaperone protein DnaK (Campylobacter curvus (strain 525.92)).